The chain runs to 55 residues: Large ribosomal subunit protein bL32 (55 aa).

This sequence belongs to the bacterial ribosomal protein bL32 family.

The polypeptide is Large ribosomal subunit protein bL32 (Aeromonas hydrophila subsp. hydrophila (strain ATCC 7966 / DSM 30187 / BCRC 13018 / CCUG 14551 / JCM 1027 / KCTC 2358 / NCIMB 9240 / NCTC 8049)).